The sequence spans 293 residues: SAGA-associated factor 29 (293 aa).

Positions 3–86 form a coiled coil; that stretch reads LVSADSRIAE…LRKALDKIAE (84 aa). In terms of domain architecture, SGF29 C-terminal spans 152-293; sequence GDYVAKPGDK…VVACKEPKKK (142 aa). Histone H3K4me3 N-terminus binding stretches follow at residues 194-196 and 240-243; these read DID and QTTC. The segment at 264–266 is histone H3K4me3 binding; the sequence is FED. At Lys288 the chain carries N6-acetyllysine.

This sequence belongs to the SGF29 family. In terms of assembly, interacts with dimethylated and trimethylated 'Lys-4' of histone H3 (H3K4me2 and H3K4me3), with a preference for the trimethylated form (H3K4me3). Component of some SAGA-type complexes. Component of the ADA2A-containing complex (ATAC), composed of KAT14, KAT2A, TADA2L, TADA3L, ZZ3, MBIP, WDR5, YEATS2, CCDC101 and DR1. Interacts with (methylated) CGAS. Interacts with TADA3L, GCN5L2, SUPT3H and MYC.

Its subcellular location is the nucleus. Functionally, chromatin reader component of some histone acetyltransferase (HAT) SAGA-type complexes like the TFTC-HAT, ATAC or STAGA complexes. SGF29 specifically recognizes and binds methylated 'Lys-4' of histone H3 (H3K4me), with a preference for trimethylated form (H3K4me3). In the SAGA-type complexes, SGF29 is required to recruit complexes to H3K4me. Involved in the response to endoplasmic reticulum (ER) stress by recruiting the SAGA complex to H3K4me, thereby promoting histone H3 acetylation and cell survival. Also binds non-histone proteins that are methylated on Lys residues: specifically recognizes and binds CGAS monomethylated on 'Lys-491'. The chain is SAGA-associated factor 29 from Mus musculus (Mouse).